The sequence spans 356 residues: Holliday junction branch migration complex subunit RuvB (356 aa).

The segment at 13 to 201 (SSNLSRKTRL…FGITQRLNFY (189 aa)) is large ATPase domain (RuvB-L). The interval 15–35 (NLSRKTRLLDPTPSLEEGKVR) is disordered. ATP is bound by residues L40, R41, G82, K85, T86, T87, 148-150 (EDF), R191, Y201, and R238. T86 provides a ligand contact to Mg(2+). The segment at 202-273 (SISDLNRIIQ…LVDKSLTLHQ (72 aa)) is small ATPAse domain (RuvB-S). Residues 276-356 (ECGLDQSDRR…NSCKNSPIIK (81 aa)) are head domain (RuvB-H). R331 and R336 together coordinate DNA.

It belongs to the RuvB family. In terms of assembly, homohexamer. Forms an RuvA(8)-RuvB(12)-Holliday junction (HJ) complex. HJ DNA is sandwiched between 2 RuvA tetramers; dsDNA enters through RuvA and exits via RuvB. An RuvB hexamer assembles on each DNA strand where it exits the tetramer. Each RuvB hexamer is contacted by two RuvA subunits (via domain III) on 2 adjacent RuvB subunits; this complex drives branch migration. In the full resolvosome a probable DNA-RuvA(4)-RuvB(12)-RuvC(2) complex forms which resolves the HJ.

It localises to the cytoplasm. It carries out the reaction ATP + H2O = ADP + phosphate + H(+). Functionally, the RuvA-RuvB-RuvC complex processes Holliday junction (HJ) DNA during genetic recombination and DNA repair, while the RuvA-RuvB complex plays an important role in the rescue of blocked DNA replication forks via replication fork reversal (RFR). RuvA specifically binds to HJ cruciform DNA, conferring on it an open structure. The RuvB hexamer acts as an ATP-dependent pump, pulling dsDNA into and through the RuvAB complex. RuvB forms 2 homohexamers on either side of HJ DNA bound by 1 or 2 RuvA tetramers; 4 subunits per hexamer contact DNA at a time. Coordinated motions by a converter formed by DNA-disengaged RuvB subunits stimulates ATP hydrolysis and nucleotide exchange. Immobilization of the converter enables RuvB to convert the ATP-contained energy into a lever motion, pulling 2 nucleotides of DNA out of the RuvA tetramer per ATP hydrolyzed, thus driving DNA branch migration. The RuvB motors rotate together with the DNA substrate, which together with the progressing nucleotide cycle form the mechanistic basis for DNA recombination by continuous HJ branch migration. Branch migration allows RuvC to scan DNA until it finds its consensus sequence, where it cleaves and resolves cruciform DNA. This is Holliday junction branch migration complex subunit RuvB from Prochlorococcus marinus (strain SARG / CCMP1375 / SS120).